Here is a 184-residue protein sequence, read N- to C-terminus: Large ribosomal subunit protein uL5c (184 aa).

This sequence belongs to the universal ribosomal protein uL5 family. Part of the 50S ribosomal subunit; contacts the 5S rRNA.

It localises to the plastid. Its subcellular location is the chloroplast. In terms of biological role, binds 5S rRNA, forms part of the central protuberance of the 50S subunit. The polypeptide is Large ribosomal subunit protein uL5c (rpl5) (Nephroselmis olivacea (Green alga)).